Reading from the N-terminus, the 231-residue chain is 2,3-bisphosphoglycerate-dependent phosphoglycerate mutase (231 aa).

Substrate-binding positions include arginine 8 to asparagine 15, threonine 21 to glycine 22, arginine 60, glutamate 87 to tyrosine 90, lysine 98, arginine 114 to arginine 115, and glycine 183 to asparagine 184. Residue histidine 9 is the Tele-phosphohistidine intermediate of the active site. Glutamate 87 functions as the Proton donor/acceptor in the catalytic mechanism.

This sequence belongs to the phosphoglycerate mutase family. BPG-dependent PGAM subfamily.

The catalysed reaction is (2R)-2-phosphoglycerate = (2R)-3-phosphoglycerate. It functions in the pathway carbohydrate degradation; glycolysis; pyruvate from D-glyceraldehyde 3-phosphate: step 3/5. In terms of biological role, catalyzes the interconversion of 2-phosphoglycerate and 3-phosphoglycerate. The polypeptide is 2,3-bisphosphoglycerate-dependent phosphoglycerate mutase (Streptococcus equi subsp. zooepidemicus (strain H70)).